The chain runs to 21 residues: Brevinin-2-related peptide (21 aa).

Leu-21 bears the Leucine amide mark.

In terms of tissue distribution, expressed by the skin glands.

The protein resides in the secreted. In terms of biological role, antimicrobial peptide with activity against Gram-negative and Gram-positive bacteria (MIC=13 uM against E.coli, MIC=25 uM against S.aureus) and fungi (MIC=25 uM against C.albicans). Also shows hemolytic activity (HC(50)=50 uM). In vitro, shows moderate inhibitory activity against HIV. This chain is Brevinin-2-related peptide, found in Lithobates septentrionalis (Mink frog).